A 975-amino-acid chain; its full sequence is Glycine dehydrogenase (decarboxylating) (975 aa).

N6-(pyridoxal phosphate)lysine is present on Lys-723.

Belongs to the GcvP family. In terms of assembly, the glycine cleavage system is composed of four proteins: P, T, L and H. The cofactor is pyridoxal 5'-phosphate.

The catalysed reaction is N(6)-[(R)-lipoyl]-L-lysyl-[glycine-cleavage complex H protein] + glycine + H(+) = N(6)-[(R)-S(8)-aminomethyldihydrolipoyl]-L-lysyl-[glycine-cleavage complex H protein] + CO2. Its function is as follows. The glycine cleavage system catalyzes the degradation of glycine. The P protein binds the alpha-amino group of glycine through its pyridoxal phosphate cofactor; CO(2) is released and the remaining methylamine moiety is then transferred to the lipoamide cofactor of the H protein. In Burkholderia ambifaria (strain MC40-6), this protein is Glycine dehydrogenase (decarboxylating).